A 255-amino-acid chain; its full sequence is Probable transcriptional regulator ycf27 (255 aa).

The Response regulatory domain maps to 9–122; the sequence is KILIADDESS…ELEARIRCVL (114 aa). Asp-58 is modified (4-aspartylphosphate). The segment at residues 78-96 is a DNA-binding region (H-T-H motif); that stretch reads DIPIIMLTALGDVTDRITG. The ompR/PhoB-type DNA-binding region spans 137–238; that stretch reads SGIINIGFLK…SRGTGYLFQR (102 aa).

The protein resides in the plastid. The protein localises to the chloroplast. Its function is as follows. Probable promoter-specific protein mediating the interaction between DNA and RNA polymerase. The chain is Probable transcriptional regulator ycf27 (ycf27) from Galdieria sulphuraria (Red alga).